The following is a 34-amino-acid chain: Brevinin-2Rf (34 aa).

A disulfide bond links C28 and C34.

In terms of tissue distribution, expressed by the skin glands.

The protein localises to the secreted. Antimicrobial peptide. This Pelophylax ridibundus (Marsh frog) protein is Brevinin-2Rf.